A 326-amino-acid chain; its full sequence is AA10 family lytic polysaccharide monooxygenase C (326 aa).

Positions 1–32 are cleaved as a signal peptide; sequence MVFSNSNASVSLFRLVALVATLSHLVFTFVDA. Cu(2+) contacts are provided by H33 and H118. A Chitin-binding type-4 domain is found at 33-200; the sequence is HGYVTFPASR…ANAFYQCLDL (168 aa). C81 and C197 are oxidised to a cystine. Residues N206, N215, N266, and N303 are each glycosylated (N-linked (GlcNAc...) asparagine). Residues 206–326 are disordered; the sequence is NSSSSSSSSN…KSQMRRDRQG (121 aa). Over residues 207 to 281 the composition is skewed to low complexity; the sequence is SSSSSSSSNS…NNGGSSGSTT (75 aa).

This sequence belongs to the polysaccharide monooxygenase AA10 family. The cofactor is Cu(2+).

It localises to the secreted. Functionally, lytic polysaccharide monooxygenase (LPMO) that oxidatively cleaves alpha- and beta-chitin with C1 regioselectivity. Catalysis by LPMOs requires the reduction of the active-site copper from Cu(II) to Cu(I) by a reducing agent and H(2)O(2) or O(2) as a cosubstrate. Exhibits enzymatic activity on U.maydis fungal cell wall chitin and Boosts chitin hydrolysis by chitinase GH18A. The protein is AA10 family lytic polysaccharide monooxygenase C of Mycosarcoma maydis (Corn smut fungus).